We begin with the raw amino-acid sequence, 363 residues long: D-xylulose reductase (363 aa).

The Zn(2+) site is built by Cys41, His66, and Glu159. 183-188 serves as a coordination point for NAD(+); it reads GAGPVG.

Belongs to the zinc-containing alcohol dehydrogenase family. Zn(2+) is required as a cofactor.

It catalyses the reaction xylitol + NAD(+) = D-xylulose + NADH + H(+). It participates in carbohydrate degradation; L-arabinose degradation via L-arabinitol; D-xylulose 5-phosphate from L-arabinose (fungal route): step 4/5. The protein is D-xylulose reductase (XYL2) of Scheffersomyces stipitis (strain ATCC 58785 / CBS 6054 / NBRC 10063 / NRRL Y-11545) (Yeast).